The chain runs to 729 residues: Fatty acid oxidation complex subunit alpha (729 aa).

The enoyl-CoA hydratase/isomerase stretch occupies residues 1–189; the sequence is MLYKGDTLYL…KIGLVDGVVK (189 aa). Asp296 contributes to the substrate binding site. A 3-hydroxyacyl-CoA dehydrogenase region spans residues 311-729; that stretch reads ETPKQAAVLG…ARPVGDLKTA (419 aa). NAD(+)-binding positions include Met324, Asp343, 400-402, Lys407, and Ser429; that span reads VVE. The For 3-hydroxyacyl-CoA dehydrogenase activity role is filled by His450. Position 453 (Asn453) interacts with NAD(+). Substrate is bound by residues Asn500 and Tyr660. Residues 708 to 729 are disordered; sequence RHNEPYYPPVEPARPVGDLKTA.

The protein in the N-terminal section; belongs to the enoyl-CoA hydratase/isomerase family. This sequence in the C-terminal section; belongs to the 3-hydroxyacyl-CoA dehydrogenase family. Heterotetramer of two alpha chains (FadB) and two beta chains (FadA).

The catalysed reaction is a (3S)-3-hydroxyacyl-CoA + NAD(+) = a 3-oxoacyl-CoA + NADH + H(+). It catalyses the reaction a (3S)-3-hydroxyacyl-CoA = a (2E)-enoyl-CoA + H2O. The enzyme catalyses a 4-saturated-(3S)-3-hydroxyacyl-CoA = a (3E)-enoyl-CoA + H2O. It carries out the reaction (3S)-3-hydroxybutanoyl-CoA = (3R)-3-hydroxybutanoyl-CoA. The catalysed reaction is a (3Z)-enoyl-CoA = a 4-saturated (2E)-enoyl-CoA. It catalyses the reaction a (3E)-enoyl-CoA = a 4-saturated (2E)-enoyl-CoA. It participates in lipid metabolism; fatty acid beta-oxidation. Its function is as follows. Involved in the aerobic and anaerobic degradation of long-chain fatty acids via beta-oxidation cycle. Catalyzes the formation of 3-oxoacyl-CoA from enoyl-CoA via L-3-hydroxyacyl-CoA. It can also use D-3-hydroxyacyl-CoA and cis-3-enoyl-CoA as substrate. This Escherichia coli O6:H1 (strain CFT073 / ATCC 700928 / UPEC) protein is Fatty acid oxidation complex subunit alpha.